The primary structure comprises 38 residues: Photosystem II reaction center protein L (38 aa).

A helical transmembrane segment spans residues 17 to 37; that stretch reads SLYWGLLLIFVLAVLFSSYIF.

The protein belongs to the PsbL family. As to quaternary structure, PSII is composed of 1 copy each of membrane proteins PsbA, PsbB, PsbC, PsbD, PsbE, PsbF, PsbH, PsbI, PsbJ, PsbK, PsbL, PsbM, PsbT, PsbY, PsbZ, Psb30/Ycf12, at least 3 peripheral proteins of the oxygen-evolving complex and a large number of cofactors. It forms dimeric complexes.

The protein localises to the plastid. It is found in the chloroplast thylakoid membrane. Its function is as follows. One of the components of the core complex of photosystem II (PSII). PSII is a light-driven water:plastoquinone oxidoreductase that uses light energy to abstract electrons from H(2)O, generating O(2) and a proton gradient subsequently used for ATP formation. It consists of a core antenna complex that captures photons, and an electron transfer chain that converts photonic excitation into a charge separation. This subunit is found at the monomer-monomer interface and is required for correct PSII assembly and/or dimerization. The protein is Photosystem II reaction center protein L of Bigelowiella natans (Pedinomonas minutissima).